The sequence spans 381 residues: Chaperone protein DnaJ (381 aa).

The J domain occupies aspartate 5–glycine 70. The CR-type zinc finger occupies glycine 140–glutamate 218. Residues cysteine 153, cysteine 156, cysteine 170, cysteine 173, cysteine 192, cysteine 195, cysteine 206, and cysteine 209 each contribute to the Zn(2+) site. CXXCXGXG motif repeat units lie at residues cysteine 153–glycine 160, cysteine 170–glycine 177, cysteine 192–glycine 199, and cysteine 206–glycine 213.

This sequence belongs to the DnaJ family. As to quaternary structure, homodimer. Requires Zn(2+) as cofactor.

The protein localises to the cytoplasm. Functionally, participates actively in the response to hyperosmotic and heat shock by preventing the aggregation of stress-denatured proteins and by disaggregating proteins, also in an autonomous, DnaK-independent fashion. Unfolded proteins bind initially to DnaJ; upon interaction with the DnaJ-bound protein, DnaK hydrolyzes its bound ATP, resulting in the formation of a stable complex. GrpE releases ADP from DnaK; ATP binding to DnaK triggers the release of the substrate protein, thus completing the reaction cycle. Several rounds of ATP-dependent interactions between DnaJ, DnaK and GrpE are required for fully efficient folding. Also involved, together with DnaK and GrpE, in the DNA replication of plasmids through activation of initiation proteins. This Cereibacter sphaeroides (strain KD131 / KCTC 12085) (Rhodobacter sphaeroides) protein is Chaperone protein DnaJ.